Consider the following 393-residue polypeptide: Phosphoglycerate kinase (393 aa).

Substrate is bound by residues D21 to N23, R36, H59 to R62, R113, and R146. Residues K197, E319, and G345–T348 contribute to the ATP site.

It belongs to the phosphoglycerate kinase family. Monomer.

The protein localises to the cytoplasm. It catalyses the reaction (2R)-3-phosphoglycerate + ATP = (2R)-3-phospho-glyceroyl phosphate + ADP. It functions in the pathway carbohydrate degradation; glycolysis; pyruvate from D-glyceraldehyde 3-phosphate: step 2/5. This Nitratidesulfovibrio vulgaris (strain DP4) (Desulfovibrio vulgaris) protein is Phosphoglycerate kinase.